We begin with the raw amino-acid sequence, 252 residues long: Transmembrane ascorbate-dependent reductase CYB561 (252 aa).

Methionine 1 bears the N-acetylmethionine mark. Topologically, residues 1-17 (MEGPASPAPAPGALPYY) are cytoplasmic. Residues 18–38 (VAFSQLLGLTVVAMTGAWLGM) traverse the membrane as a helical segment. Positions 20-221 (FSQLLGLTVV…FATVVLYILT (202 aa)) constitute a Cytochrome b561 domain. Over 39–52 (YRGGIAWESALQFN) the chain is Vesicular. The chain crosses the membrane as a helical span at residues 53 to 73 (VHPLCMVIGLVFLQGDALLVY). Positions 54, 74, and 81 each coordinate heme b. Residues 74 to 86 (RVFRNEAKRTTKV) are Cytoplasmic-facing. Residues lysine 81 and lysine 85 each contribute to the L-ascorbate site. A helical membrane pass occupies residues 87–107 (LHGLLHVFAFVIALVGLVAVF). Heme b is bound by residues histidine 88, 117 to 120 (DLYS), and histidine 122. Residues 108–125 (EHHRKKGYADLYSLHSWC) lie on the Vesicular side of the membrane. Residues 126 to 146 (GILVFALFFAQWLVGFSFFLF) form a helical membrane-spanning segment. Over 147–159 (PGASFSLRSRYRP) the chain is Cytoplasmic. Arginine 154 is a binding site for L-ascorbate. The helical transmembrane segment at 160-180 (QHVFFGAAIFLLSVATALLGL) threads the bilayer. Residues histidine 161 and glutamate 182 each coordinate heme b. Topologically, residues 181-199 (KEALLFELGTKYSTFEPEG) are vesicular. The helical transmembrane segment at 200–220 (VLANVLGLLLAAFATVVLYIL) threads the bilayer. The Cytoplasmic segment spans residues 221 to 252 (TRADWKRPLQAEEQALSMDFKTLTEGDSPSSQ). Position 226 (lysine 226) interacts with heme b. Serine 248 and serine 250 each carry phosphoserine.

It depends on heme b as a cofactor.

Its subcellular location is the cytoplasmic vesicle. It localises to the secretory vesicle. The protein localises to the chromaffin granule membrane. The catalysed reaction is monodehydro-L-ascorbate radical(out) + L-ascorbate(in) = monodehydro-L-ascorbate radical(in) + L-ascorbate(out). Its function is as follows. Transmembrane reductase that uses ascorbate as an electron donor in the cytoplasm and transfers electrons across membranes to reduce monodehydro-L-ascorbate radical in the lumen of secretory vesicles. It is therefore involved the regeneration and homeostasis within secretory vesicles of ascorbate which in turn provides reducing equivalents needed to support the activity of intravesicular enzymes. This chain is Transmembrane ascorbate-dependent reductase CYB561 (CYB561), found in Ovis aries (Sheep).